Consider the following 336-residue polypeptide: Immune-associated nucleotide-binding protein 13 (336 aa).

The AIG1-type G domain maps to 15–221 (KPERTLVLLG…YMADLSHELR (207 aa)). Positions 24 to 31 (GRTGNGKS) are G1. Residues 24 to 32 (GRTGNGKSA) and Ser45 contribute to the GTP site. The tract at residues 51-55 (FITKE) is G2. Positions 73–76 (DTPG) are G3. A G4 region spans residues 143–146 (TNED). Residues 179–181 (DNS) form a G5 region. Asn180 is a GTP binding site. A coiled-coil region spans residues 265-328 (KEKISNQLKE…EKETASLRTE (64 aa)).

Belongs to the TRAFAC class TrmE-Era-EngA-EngB-Septin-like GTPase superfamily. AIG1/Toc34/Toc159-like paraseptin GTPase family. IAN subfamily. As to expression, expressed in pollen grains.

The sequence is that of Immune-associated nucleotide-binding protein 13 from Arabidopsis thaliana (Mouse-ear cress).